The sequence spans 441 residues: Ribosomal protein uS12 methylthiotransferase RimO (441 aa).

The 111-residue stretch at 8–118 (PKIGFVSLGC…VLEHVHHYSP (111 aa)) folds into the MTTase N-terminal domain. 6 residues coordinate [4Fe-4S] cluster: Cys-17, Cys-53, Cys-82, Cys-150, Cys-154, and Cys-157. Residues 136–373 (LTPRHYAYLK…MQLQQQISAE (238 aa)) enclose the Radical SAM core domain. In terms of domain architecture, TRAM spans 376–441 (QEKVGREILV…DEYDLWGTRV (66 aa)).

The protein belongs to the methylthiotransferase family. RimO subfamily. The cofactor is [4Fe-4S] cluster.

It localises to the cytoplasm. The enzyme catalyses L-aspartate(89)-[ribosomal protein uS12]-hydrogen + (sulfur carrier)-SH + AH2 + 2 S-adenosyl-L-methionine = 3-methylsulfanyl-L-aspartate(89)-[ribosomal protein uS12]-hydrogen + (sulfur carrier)-H + 5'-deoxyadenosine + L-methionine + A + S-adenosyl-L-homocysteine + 2 H(+). Its function is as follows. Catalyzes the methylthiolation of an aspartic acid residue of ribosomal protein uS12. This is Ribosomal protein uS12 methylthiotransferase RimO from Klebsiella pneumoniae (strain 342).